A 551-amino-acid polypeptide reads, in one-letter code: Formate--tetrahydrofolate ligase (551 aa).

54–61 is an ATP binding site; sequence TPPGEGKT.

The protein belongs to the formate--tetrahydrofolate ligase family.

It carries out the reaction (6S)-5,6,7,8-tetrahydrofolate + formate + ATP = (6R)-10-formyltetrahydrofolate + ADP + phosphate. It participates in one-carbon metabolism; tetrahydrofolate interconversion. The sequence is that of Formate--tetrahydrofolate ligase from Myxococcus xanthus (strain DK1622).